A 531-amino-acid polypeptide reads, in one-letter code: CTP synthase (531 aa).

Positions 1 to 267 (MTKYIFVTGG…DQIVCEHLRL (267 aa)) are amidoligase domain. S13 contacts CTP. S13 lines the UTP pocket. 14 to 19 (SLGKGI) provides a ligand contact to ATP. Y54 serves as a coordination point for L-glutamine. D71 contributes to the ATP binding site. Residues D71 and E141 each coordinate Mg(2+). CTP contacts are provided by residues 148 to 150 (DIE), 188 to 193 (KTKPTQ), and K224. Residues 188–193 (KTKPTQ) and K224 contribute to the UTP site. An ATP-binding site is contributed by 240–242 (RDA). The Glutamine amidotransferase type-1 domain occupies 292-531 (KIALVGKYVE…REFVRASLKE (240 aa)). G354 is an L-glutamine binding site. The Nucleophile; for glutamine hydrolysis role is filled by C381. L-glutamine-binding positions include 382 to 385 (LGMQ), E405, and R462. Residues H507 and E509 contribute to the active site.

The protein belongs to the CTP synthase family. As to quaternary structure, homotetramer.

It catalyses the reaction UTP + L-glutamine + ATP + H2O = CTP + L-glutamate + ADP + phosphate + 2 H(+). The enzyme catalyses L-glutamine + H2O = L-glutamate + NH4(+). The catalysed reaction is UTP + NH4(+) + ATP = CTP + ADP + phosphate + 2 H(+). The protein operates within pyrimidine metabolism; CTP biosynthesis via de novo pathway; CTP from UDP: step 2/2. Allosterically activated by GTP, when glutamine is the substrate; GTP has no effect on the reaction when ammonia is the substrate. The allosteric effector GTP functions by stabilizing the protein conformation that binds the tetrahedral intermediate(s) formed during glutamine hydrolysis. Inhibited by the product CTP, via allosteric rather than competitive inhibition. Catalyzes the ATP-dependent amination of UTP to CTP with either L-glutamine or ammonia as the source of nitrogen. Regulates intracellular CTP levels through interactions with the four ribonucleotide triphosphates. In Geobacillus kaustophilus (strain HTA426), this protein is CTP synthase.